Reading from the N-terminus, the 303-residue chain is Probable cell division protein WhiA (303 aa).

The segment at residues 272–303 is a DNA-binding region (H-T-H motif); that stretch reads SIQQIADSLETPLSKSGVNHRLRKINKIADEL.

The protein belongs to the WhiA family.

Involved in cell division and chromosome segregation. This Streptococcus agalactiae serotype Ia (strain ATCC 27591 / A909 / CDC SS700) protein is Probable cell division protein WhiA.